The sequence spans 385 residues: L-arabinitol 4-dehydrogenase (385 aa).

Zn(2+) contacts are provided by C54, H79, E80, C109, C112, C115, C123, and E164. NAD(+) contacts are provided by residues 191–192 (PI), D212, R217, I292, and 316–318 (QYR).

Belongs to the zinc-containing alcohol dehydrogenase family. In terms of assembly, homotetramer. Requires Zn(2+) as cofactor.

It carries out the reaction L-arabinitol + NAD(+) = L-xylulose + NADH + H(+). The protein operates within carbohydrate degradation; L-arabinose degradation via L-arabinitol; D-xylulose 5-phosphate from L-arabinose (fungal route): step 2/5. In terms of biological role, catalyzes the NAD-dependent oxidation of L-arabinitol to L-xylulose in the fungal L-arabinose catabolic pathway. L-arabinose catabolism is important for using plant material as a carbon source. NADP cannot act as a cosubstrate. In Penicillium rubens (strain ATCC 28089 / DSM 1075 / NRRL 1951 / Wisconsin 54-1255) (Penicillium chrysogenum), this protein is L-arabinitol 4-dehydrogenase (lad1).